The following is a 1424-amino-acid chain: S-layer protein A (1424 aa).

The N-terminal stretch at 1–24 (MNKLVGLLVSSLFLASILIGIAPA) is a signal peptide. Asn60, Asn70, Asn276, Asn295, Asn342, Asn358, Asn377, Asn468, Asn517, Asn545, Asn559, Asn581, Asn633, Asn714, Asn875, Asn914, Asn955, Asn989, Asn1018, Asn1042, Asn1093, Asn1134, Asn1197, Asn1217, Asn1252, Asn1276, Asn1304, and Asn1419 each carry an N-linked (GlcNAc...) asparagine glycan.

Belongs to the Sulfolobales SlaA family. The mushroom-shaped unit cells of the Sulfolobales' S-layers may consist of three SlaB subunits and six SlaA subunits. Glycosylated. C-terminal glycosylation sites are modified with a heterogeneous family of glycans, with the largest having a composition Glc(1)Man(2)GlcNAc(2) plus 6-sulfoquinovose (QuiS).

The protein resides in the secreted. The protein localises to the cell wall. It localises to the S-layer. S-layer large protein. May form the highly ordered outer sheath. The protein is S-layer protein A of Sulfolobus acidocaldarius (strain ATCC 33909 / DSM 639 / JCM 8929 / NBRC 15157 / NCIMB 11770).